The primary structure comprises 508 residues: Photosystem II CP47 reaction center protein (508 aa).

6 consecutive transmembrane segments (helical) span residues 21 to 36 (SVHI…WAGS), 101 to 115 (IMFS…IWHW), 140 to 156 (GIHL…FGAF), 203 to 218 (IAAG…FHLS), 237 to 252 (VLSS…AFIV), and 457 to 472 (TFAL…HGAR).

The protein belongs to the PsbB/PsbC family. PsbB subfamily. PSII is composed of 1 copy each of membrane proteins PsbA, PsbB, PsbC, PsbD, PsbE, PsbF, PsbH, PsbI, PsbJ, PsbK, PsbL, PsbM, PsbT, PsbX, PsbY, PsbZ, Psb30/Ycf12, at least 3 peripheral proteins of the oxygen-evolving complex and a large number of cofactors. It forms dimeric complexes. Binds multiple chlorophylls. PSII binds additional chlorophylls, carotenoids and specific lipids. serves as cofactor.

The protein localises to the plastid. The protein resides in the chloroplast thylakoid membrane. In terms of biological role, one of the components of the core complex of photosystem II (PSII). It binds chlorophyll and helps catalyze the primary light-induced photochemical processes of PSII. PSII is a light-driven water:plastoquinone oxidoreductase, using light energy to abstract electrons from H(2)O, generating O(2) and a proton gradient subsequently used for ATP formation. The protein is Photosystem II CP47 reaction center protein of Pinus koraiensis (Korean pine).